The chain runs to 535 residues: MTDQTTRLPVRRALISVSDKTGILEFARELQQLGVEILSTGGTYKLLKDNGVNAVEVADYTGFAEMMDGRVKTLHPKIHGGILGRRGTDDAIMNEHGIKPIDLVAVNLYPFEATISKPGCDLPTAIENIDIGGPTMVRSAAKNHKDVAIVVNASDYAGIVEGLKVGGLTYAQRFDLMLKAFEHTAAYDGMIANYMGTIDQAKDTLSTADRSEFPRTFNSQFVKAQEMRYGENPHQSAAFYVEAKKGEASISTAIQLQGKELSFNNVADTDAALECVKSFVKPACVIVKHANPCGVAVVPEEEGGIRKAYDLAYATDTESAFGGIIAFNRELDGETAKAIVDRQFVEVIIAPKISQAARDVVAAKQNVRLLECGEWPAERAAGWDFKRVNGGLLVQSRDIGMITADDLKIVTKRAPTEQEIHDLVFAWKVAKFVKSNAIVYAKQRQTIGVGAGQMSRVNSARIAAIKAEHAGLQVQGAVMASDAFFPFRDGIDNAAKVGISAVIQPGGSMRDAEVIAAADEAGIAMVFTGMRHFRH.

The 146-residue stretch at 6–151 (TRLPVRRALI…KNHKDVAIVV (146 aa)) folds into the MGS-like domain.

It belongs to the PurH family.

It catalyses the reaction (6R)-10-formyltetrahydrofolate + 5-amino-1-(5-phospho-beta-D-ribosyl)imidazole-4-carboxamide = 5-formamido-1-(5-phospho-D-ribosyl)imidazole-4-carboxamide + (6S)-5,6,7,8-tetrahydrofolate. The enzyme catalyses IMP + H2O = 5-formamido-1-(5-phospho-D-ribosyl)imidazole-4-carboxamide. It functions in the pathway purine metabolism; IMP biosynthesis via de novo pathway; 5-formamido-1-(5-phospho-D-ribosyl)imidazole-4-carboxamide from 5-amino-1-(5-phospho-D-ribosyl)imidazole-4-carboxamide (10-formyl THF route): step 1/1. It participates in purine metabolism; IMP biosynthesis via de novo pathway; IMP from 5-formamido-1-(5-phospho-D-ribosyl)imidazole-4-carboxamide: step 1/1. This is Bifunctional purine biosynthesis protein PurH from Pseudomonas putida (strain GB-1).